A 1086-amino-acid chain; its full sequence is Transcription initiation factor TFIID subunit 2 (1086 aa).

Residues 1–11 show a composition bias toward polar residues; that stretch reads MDFSEASTSGD. Disordered stretches follow at residues 1–53 and 1064–1086; these read MDFS…PPPV and GYEAARRSPPRRDFGDETMNLMQ. Composition is skewed to pro residues over residues 19–36 and 44–53; these read PFPPKPREGAPPPAPPLA and APPPLQPPPV. The segment covering 1067–1078 has biased composition (basic and acidic residues); the sequence is AARRSPPRRDFG.

It belongs to the TAF2 family. In terms of assembly, component of the TFIID basal transcription factor complex, composed of TATA-box-binding protein tbp-1, and a number of TBP-associated factors (TAFs).

The protein resides in the nucleus. In terms of biological role, the TFIID basal transcription factor complex plays a major role in the initiation of RNA polymerase II (Pol II)-dependent transcription. TFIID recognizes and binds promoters via its subunit tbp-1, a TATA-box-binding protein, and promotes assembly of the pre-initiation complex (PIC). The TFIID complex consists of tbp-1 and TBP-associated factors (TAFs), including taf-2. May regulate RNA polymerase II activity and thereby may control transcription initiation by RNA polymerase II. This chain is Transcription initiation factor TFIID subunit 2, found in Caenorhabditis elegans.